Reading from the N-terminus, the 138-residue chain is Basic phospholipase A2 homolog TM-N49 (138 aa).

A signal peptide spans 1–16 (MRTLWIMAVLLLGVEG). Disulfide bonds link Cys42–Cys131, Cys44–Cys60, Cys59–Cys111, Cys65–Cys138, Cys66–Cys104, Cys73–Cys97, and Cys91–Cys102.

It belongs to the phospholipase A2 family. Group II subfamily. N49 sub-subfamily. Homodimer; non-covalently linked. As to expression, expressed by the venom gland.

It localises to the secreted. Snake venom phospholipase A2 (PLA2) that exhibits potent myotoxic activity causing inflammatory cell infiltration, severe myoedema, myonecrosis and myolysis in the gastrocnemius muscles of BALB/c mice. This is Basic phospholipase A2 homolog TM-N49 from Protobothrops mucrosquamatus (Taiwan habu).